The following is a 568-amino-acid chain: SLAIN motif-containing protein 1 (568 aa).

5 disordered regions span residues 1-22, 59-92, 139-162, 235-256, and 291-403; these read MMAE…SGPV, LLLL…TAAA, GGGP…SPPP, YTSR…STSE, and STSA…LRRS. A coiled-coil region spans residues 21–56; that stretch reads PVVNAELEVKKLQELVRKLEKQNEQLRSRAASAAAA. Residues 62–74 show a composition bias toward pro residues; sequence LPPPPPAAPPPAG. A compositionally biased stretch (low complexity) spans 75–92; that stretch reads LQPLGPRSPPAATATAAA. Gly residues predominate over residues 139–149; the sequence is GGGPEPGGAGT. Residues 235–245 show a composition bias toward polar residues; it reads YTSRGSPLSPQ. At serine 243 the chain carries Phosphoserine. Composition is skewed to low complexity over residues 246–255 and 291–307; these read SSIDSELSTS and STSA…SLSS. Acidic residues predominate over residues 316 to 329; that stretch reads QEYDQYSLEDEEEF. Residues 366–384 are compositionally biased toward low complexity; sequence SSQYFPSNNYQQQQYYSPQ. The segment covering 385-395 has biased composition (polar residues); the sequence is AQTPDQQPNRT. Asymmetric dimethylarginine occurs at positions 471 and 543.

This sequence belongs to the SLAIN motif-containing family. Interacts with MAPRE1, MAPRE2, MAPRE3 and CKAP5. Interacts with ZDHHC17 (via ANK repeats). In terms of tissue distribution, expressed in embryonic stem cells. Expressed in brain.

The protein resides in the cytoplasm. It is found in the cytoskeleton. In terms of biological role, microtubule plus-end tracking protein that might be involved in the regulation of cytoplasmic microtubule dynamics, microtubule organization and microtubule elongation. This Homo sapiens (Human) protein is SLAIN motif-containing protein 1 (SLAIN1).